The following is a 251-amino-acid chain: Segregation and condensation protein A (251 aa).

The protein belongs to the ScpA family. As to quaternary structure, component of a cohesin-like complex composed of ScpA, ScpB and the Smc homodimer, in which ScpA and ScpB bind to the head domain of Smc. The presence of the three proteins is required for the association of the complex with DNA.

The protein resides in the cytoplasm. Its function is as follows. Participates in chromosomal partition during cell division. May act via the formation of a condensin-like complex containing Smc and ScpB that pull DNA away from mid-cell into both cell halves. This is Segregation and condensation protein A from Clostridium botulinum (strain Alaska E43 / Type E3).